The chain runs to 578 residues: Probable actinorhodin transporter (578 aa).

Positions 1 to 33 (MSSVEADEPDRATAPPSALLPEDGPGPDGTAAG) are disordered. A run of 12 helical transmembrane segments spans residues 78–98 (VIQW…VVGG), 109–129 (MFVV…VAAG), 135–155 (AARF…LGLI), 170–190 (AFGP…GFLV), 202–222 (VFLI…LLLP), 232–252 (FDVV…FPLV), 259–279 (WPAW…GFVA), 306–326 (GLAV…LLAL), 341–361 (LTMT…GAVL), 369–389 (ALHG…LTIG), 444–464 (LGFT…LGSQ), and 546–566 (AMVR…ALAF).

It belongs to the major facilitator superfamily. EmrB family.

The protein localises to the cell membrane. In terms of biological role, promotes the efflux of actinorhodin. The protein is Probable actinorhodin transporter (actII-2) of Streptomyces coelicolor (strain ATCC BAA-471 / A3(2) / M145).